The chain runs to 248 residues: tRNA (guanine-N(1)-)-methyltransferase (248 aa).

Residues Gly-113 and 133–138 (IGDYVL) contribute to the S-adenosyl-L-methionine site.

This sequence belongs to the RNA methyltransferase TrmD family. As to quaternary structure, homodimer.

The protein resides in the cytoplasm. It carries out the reaction guanosine(37) in tRNA + S-adenosyl-L-methionine = N(1)-methylguanosine(37) in tRNA + S-adenosyl-L-homocysteine + H(+). Its function is as follows. Specifically methylates guanosine-37 in various tRNAs. In Shewanella halifaxensis (strain HAW-EB4), this protein is tRNA (guanine-N(1)-)-methyltransferase.